The primary structure comprises 210 residues: Imidazole glycerol phosphate synthase subunit HisH 1 (210 aa).

Residues 3-210 form the Glutamine amidotransferase type-1 domain; the sequence is KIAIVDYGMC…LDNFLSFSNV (208 aa). The active-site Nucleophile is Cys82. Active-site residues include His189 and Glu191.

In terms of assembly, heterodimer of HisH and HisF.

It is found in the cytoplasm. It catalyses the reaction 5-[(5-phospho-1-deoxy-D-ribulos-1-ylimino)methylamino]-1-(5-phospho-beta-D-ribosyl)imidazole-4-carboxamide + L-glutamine = D-erythro-1-(imidazol-4-yl)glycerol 3-phosphate + 5-amino-1-(5-phospho-beta-D-ribosyl)imidazole-4-carboxamide + L-glutamate + H(+). It carries out the reaction L-glutamine + H2O = L-glutamate + NH4(+). It participates in amino-acid biosynthesis; L-histidine biosynthesis; L-histidine from 5-phospho-alpha-D-ribose 1-diphosphate: step 5/9. IGPS catalyzes the conversion of PRFAR and glutamine to IGP, AICAR and glutamate. The HisH subunit provides the glutamine amidotransferase activity that produces the ammonia necessary to HisF for the synthesis of IGP and AICAR. The protein is Imidazole glycerol phosphate synthase subunit HisH 1 (hisH1) of Parasynechococcus marenigrum (strain WH8102).